The sequence spans 704 residues: Ion-translocating oxidoreductase complex subunit C (704 aa).

4Fe-4S ferredoxin-type domains follow at residues 368 to 397 (MGAPQEEKSCIRCSACADACPADLLPQQLY) and 407 to 436 (KATAHHIADCIECGACAWVCPSNIPLVQYF). [4Fe-4S] cluster is bound by residues Cys-377, Cys-380, Cys-383, Cys-387, Cys-416, Cys-419, Cys-422, and Cys-426. The disordered stretch occupies residues 534–682 (QARAKQAAHP…AEPADPRKAA (149 aa)).

It belongs to the 4Fe4S bacterial-type ferredoxin family. RnfC subfamily. As to quaternary structure, the complex is composed of six subunits: RsxA, RsxB, RsxC, RsxD, RsxE and RsxG. Requires [4Fe-4S] cluster as cofactor.

The protein resides in the cell inner membrane. Part of a membrane-bound complex that couples electron transfer with translocation of ions across the membrane. Required to maintain the reduced state of SoxR. This Salmonella enteritidis PT4 (strain P125109) protein is Ion-translocating oxidoreductase complex subunit C.